A 265-amino-acid polypeptide reads, in one-letter code: Gamma-secretase subunit APH-1A (265 aa).

The Lumenal portion of the chain corresponds to 1–2; the sequence is MG. The helical transmembrane segment at 3–23 threads the bilayer; the sequence is AAVFFGCTFVAFGPAFSLFLI. Over 24–31 the chain is Cytoplasmic; it reads TVAGDPLR. Residues 32–52 form a helical membrane-spanning segment; sequence VIILVAGAFFWLVSLLLASVV. Topologically, residues 53–68 are lumenal; the sequence is WFILVHVTDRSDARLQ. A helical transmembrane segment spans residues 69 to 89; sequence YGLLIFGAAVSVLLQEVFRFA. Residues 90 to 118 lie on the Cytoplasmic side of the membrane; that stretch reads YYKLLKKADEGLASLSEDGRSPISIRQMA. The helical transmembrane segment at 119 to 139 threads the bilayer; that stretch reads YVSGLSFGIISGVFSVINILA. Topologically, residues 140-158 are lumenal; that stretch reads DALGPGVVGIHGDSPYYFL. The helical transmembrane segment at 159–179 threads the bilayer; it reads TSAFLTAAIILLHTFWGVVFF. Over 180 to 186 the chain is Cytoplasmic; that stretch reads DACERRR. A helical transmembrane segment spans residues 187-207; sequence YWALGLVVGSHLLTSGLTFLN. At 208–213 the chain is on the lumenal side; it reads PWYEAS. A helical transmembrane segment spans residues 214–234; it reads LLPIYAVTVSMGLWAFITAGG. The Cytoplasmic segment spans residues 235–265; it reads SLRSIQRSLSCRRQEDSRVMVYSALRIPPED.

The protein belongs to the APH-1 family. The functional gamma-secretase complex is composed of at least four polypeptides: a presenilin homodimer (PSEN1 or PSEN2), nicastrin (NCSTN), APH1 (APH1A or APH1B) and PSENEN/PEN2.

It is found in the endoplasmic reticulum membrane. It localises to the golgi apparatus. Its subcellular location is the golgi stack membrane. Non-catalytic subunit of the gamma-secretase complex, an endoprotease complex that catalyzes the intramembrane cleavage of integral membrane proteins such as Notch receptors and APP (amyloid-beta precursor protein). Required for normal gamma-secretase assembly. The gamma-secretase complex plays a role in Notch and Wnt signaling cascades and regulation of downstream processes via its role in processing key regulatory proteins, and by regulating cytosolic CTNNB1 levels. The chain is Gamma-secretase subunit APH-1A (Aph1a) from Mus musculus (Mouse).